The sequence spans 146 residues: Transmembrane protein 207 (146 aa).

The first 29 residues, 1 to 29 (MSRSRLFSVTSAISTIGILCLPLFQLVLS), serve as a signal peptide directing secretion. A helical transmembrane segment spans residues 52-72 (IWILLLLVLVAALLCGAVVLC).

Interacts with WWOX. In terms of tissue distribution, expressed in some signet-ring cell carcinoma, especially those showing high invasion and metastatic activity (at protein level).

The protein localises to the membrane. This Homo sapiens (Human) protein is Transmembrane protein 207 (TMEM207).